Here is a 248-residue protein sequence, read N- to C-terminus: Probable aquaporin TIP2-2 (248 aa).

Transmembrane regions (helical) follow at residues 21–41 (AYVA…GSAI) and 55–75 (AGLV…VAIG). The NPA 1 signature appears at 84–86 (NPA). Helical transmembrane passes span 87-109 (VTFG…WIAQ), 133-153 (LSGV…FGLV), and 168-188 (LGTI…LVAG). Positions 196 to 198 (NPA) match the NPA 2 motif. A helical membrane pass occupies residues 210–230 (YTNIWIYWVGPLVGGGLAGLV).

It belongs to the MIP/aquaporin (TC 1.A.8) family. TIP (TC 1.A.8.10) subfamily. Expressed in roots and leaves.

It localises to the vacuole membrane. Functionally, aquaporins facilitate the transport of water and small neutral solutes across cell membranes. May be involved in transport from the vacuolar compartment to the cytoplasm. In Oryza sativa subsp. japonica (Rice), this protein is Probable aquaporin TIP2-2 (TIP2-2).